The chain runs to 254 residues: Type III pantothenate kinase (254 aa).

ATP is bound at residue 6 to 13 (DVGNTNIV). Substrate contacts are provided by residues phenylalanine 100 and 107 to 110 (GADR). The active-site Proton acceptor is the aspartate 109. Aspartate 129 is a K(+) binding site. An ATP-binding site is contributed by threonine 132. Substrate is bound at residue threonine 184.

The protein belongs to the type III pantothenate kinase family. As to quaternary structure, homodimer. Requires NH4(+) as cofactor. K(+) serves as cofactor.

The protein localises to the cytoplasm. The enzyme catalyses (R)-pantothenate + ATP = (R)-4'-phosphopantothenate + ADP + H(+). It functions in the pathway cofactor biosynthesis; coenzyme A biosynthesis; CoA from (R)-pantothenate: step 1/5. In terms of biological role, catalyzes the phosphorylation of pantothenate (Pan), the first step in CoA biosynthesis. The protein is Type III pantothenate kinase of Moorella thermoacetica (strain ATCC 39073 / JCM 9320).